The sequence spans 194 residues: tRNA (mnm(5)s(2)U34)-methyltransferase (194 aa).

Positions 33, 34, 52, 54, 79, and 80 each coordinate S-adenosyl-L-methionine.

This sequence belongs to the methyltransferase superfamily. MnmM family. In terms of assembly, homodimer.

It catalyses the reaction 5-aminomethyl-2-thiouridine(34) in tRNA + S-adenosyl-L-methionine = 5-methylaminomethyl-2-thiouridine(34) in tRNA + S-adenosyl-L-homocysteine + H(+). It functions in the pathway tRNA modification. Involved in the biosynthesis of 5-methylaminomethyl-2-thiouridine (mnm(5)s(2)U) at the wobble position (U34) in tRNA. Catalyzes the transfer of a methyl group from S-adenosyl-L-methionine to nm(5)s(2)U34 to form mnm(5)s(2)U34. This Bacillus subtilis (strain 168) protein is tRNA (mnm(5)s(2)U34)-methyltransferase.